The chain runs to 202 residues: Helix-loop-helix protein 10 (202 aa).

Disordered regions lie at residues 1–26 (MESS…NSEL) and 83–112 (QNKS…GKID). Polar residues predominate over residues 17-26 (STGNHGNSEL). Residues 121–134 (TRRYEANARERNRV) are basic motif. The bHLH domain occupies 121–172 (TRRYEANARERNRVQQLSKMFDQLRVCLPIEDDAKISKLATLKVASSYIGYL). The segment at 135–172 (QQLSKMFDQLRVCLPIEDDAKISKLATLKVASSYIGYL) is helix-loop-helix motif.

In terms of assembly, heterodimer with hlh-2. In terms of tissue distribution, expressed in intestine, neurons in head, body and tail, and in body hypodermis, and vulva. Expressed in neurons in the male-specific genital sensilla (simple sense organs) known as rays.

The protein localises to the nucleus. It localises to the cytoplasm. Its function is as follows. Probable transcription factor which binds the E box motif 5'-CA[TC][AG]TG-3'. The chain is Helix-loop-helix protein 10 from Caenorhabditis elegans.